The primary structure comprises 111 residues: HTH-type transcriptional regulator SinR (111 aa).

The HTH cro/C1-type domain occupies Ile-6–Leu-61. The H-T-H motif DNA-binding region spans Leu-17 to Arg-36. A Sin domain is found at Lys-65 to Lys-103.

Homotetramer. Also associates with SinI.

Functionally, affects autolysin level and flagellation. The chain is HTH-type transcriptional regulator SinR (sinR) from Bacillus licheniformis.